Here is a 732-residue protein sequence, read N- to C-terminus: Elongation factor 2 (732 aa).

The tr-type G domain maps to 19-230; it reads ERIRNMGIAA…VSFKDIIDLT (212 aa). GTP contacts are provided by residues 28 to 35, 94 to 98, and 148 to 151; these read AHIDHGKT, DTPGH, and NKVD. A Diphthamide modification is found at His597.

This sequence belongs to the TRAFAC class translation factor GTPase superfamily. Classic translation factor GTPase family. EF-G/EF-2 subfamily.

Its subcellular location is the cytoplasm. Catalyzes the GTP-dependent ribosomal translocation step during translation elongation. During this step, the ribosome changes from the pre-translocational (PRE) to the post-translocational (POST) state as the newly formed A-site-bound peptidyl-tRNA and P-site-bound deacylated tRNA move to the P and E sites, respectively. Catalyzes the coordinated movement of the two tRNA molecules, the mRNA and conformational changes in the ribosome. This is Elongation factor 2 from Thermococcus sibiricus (strain DSM 12597 / MM 739).